The sequence spans 50 residues: DNA replication protein repEA (50 aa).

Its function is as follows. Involved in T4 DNA replication. Binds to ssDNA. The chain is DNA replication protein repEA (repEA) from Enterobacteria phage T4 (Bacteriophage T4).